A 443-amino-acid polypeptide reads, in one-letter code: MRLSRYFLPVMKETPADAQIISHKLMLRAGMIRQTAAGIYAWLPLGLRVLRRIEKIIREEQARAGALELLMPTLQTADLWRESGRYDAYGPEMLRIKDRHNRELLYGPTNEEMITALIRDNLQSYRDLPRIFYHIQWKFRDEVRPRFGVMRGREFLMKDAYSFDIDETAGRHNYNRMFVAYLNSFSRLGLRAIPMQADTGPIGGDLSHEFIVLAPNGESDVFYHSNWEQPTRHIEADFDDPKALQSIVNDHISDYAATDEKRDPLREAQAGDKLRQSRGIEVGHIFFFGTKYSKPMGFTLPGPDGKPIPIQMGSYGIGISRLLGAIIEASHDDNGIIWPEAVAPYHVGLINLRIDDENCRAIADSLYQRLEAAGIDTLYDDRNERGGAKFATMDLIGLPWQVVIGPKGAEKGVVELKNRASGEKQTISVEDAFNLLTAGHQQR.

This sequence belongs to the class-II aminoacyl-tRNA synthetase family. ProS type 2 subfamily. As to quaternary structure, homodimer.

The protein resides in the cytoplasm. The catalysed reaction is tRNA(Pro) + L-proline + ATP = L-prolyl-tRNA(Pro) + AMP + diphosphate. In terms of biological role, catalyzes the attachment of proline to tRNA(Pro) in a two-step reaction: proline is first activated by ATP to form Pro-AMP and then transferred to the acceptor end of tRNA(Pro). The sequence is that of Proline--tRNA ligase from Zymomonas mobilis subsp. mobilis (strain ATCC 10988 / DSM 424 / LMG 404 / NCIMB 8938 / NRRL B-806 / ZM1).